Here is a 276-residue protein sequence, read N- to C-terminus: Glucosamine-6-phosphate deaminase 2 (276 aa).

D72 functions as the Proton acceptor; for enolization step in the catalytic mechanism. Residues 103–131 (NAHILDGNAADLQAECDAFEEKIKEAGGI) adopt a coiled-coil conformation. The active-site For ring-opening step is D141. The active-site Proton acceptor; for ring-opening step is the H143. Residue E148 is the For ring-opening step of the active site. T161 is modified (phosphothreonine).

The protein belongs to the glucosamine/galactosamine-6-phosphate isomerase family. As to quaternary structure, homohexamer.

The protein resides in the cytoplasm. The catalysed reaction is alpha-D-glucosamine 6-phosphate + H2O = beta-D-fructose 6-phosphate + NH4(+). It participates in nucleotide-sugar biosynthesis; UDP-N-acetyl-alpha-D-glucosamine biosynthesis; alpha-D-glucosamine 6-phosphate from D-fructose 6-phosphate: step 1/1. With respect to regulation, allosterically activated by N-acetylglucosamine-6-phosphate (GlcNAc6P). Functionally, catalyzes the reversible conversion of alpha-D-glucosamine 6-phosphate (GlcN-6P) into beta-D-fructose 6-phosphate (Fru-6P) and ammonium ion, a regulatory reaction step in de novo uridine diphosphate-N-acetyl-alpha-D-glucosamine (UDP-GlcNAc) biosynthesis via hexosamine pathway. Deamination is coupled to aldo-keto isomerization mediating the metabolic flux from UDP-GlcNAc toward Fru-6P. At high ammonium level can drive amination and isomerization of Fru-6P toward hexosamines and UDP-GlcNAc synthesis. Has a role in fine tuning the metabolic fluctuations of cytosolic UDP-GlcNAc and their effects on hyaluronan synthesis that occur during tissue remodeling. This chain is Glucosamine-6-phosphate deaminase 2, found in Mus musculus (Mouse).